Reading from the N-terminus, the 120-residue chain is NADH-ubiquinone oxidoreductase chain 3 (120 aa).

The next 3 helical transmembrane spans lie at 6-26 (LLFFVEHVFIFCMIFWLLTWV), 63-83 (IVCVFLILYDVEFIFMYPFFF), and 85-105 (FFLVNAGAFLVFFVFLFFVFY).

The protein belongs to the complex I subunit 3 family.

It localises to the mitochondrion membrane. The enzyme catalyses a ubiquinone + NADH + 5 H(+)(in) = a ubiquinol + NAD(+) + 4 H(+)(out). Its function is as follows. Core subunit of the mitochondrial membrane respiratory chain NADH dehydrogenase (Complex I) that is believed to belong to the minimal assembly required for catalysis. Complex I functions in the transfer of electrons from NADH to the respiratory chain. The immediate electron acceptor for the enzyme is believed to be ubiquinone. This Paramecium tetraurelia protein is NADH-ubiquinone oxidoreductase chain 3 (ND3).